The sequence spans 228 residues: Max-interacting protein 1 (228 aa).

Disordered regions lie at residues 29 to 76 (GYAS…NELE) and 161 to 228 (IGST…SFTS). A compositionally biased stretch (basic residues) spans 43–56 (QHSKPPRRLSRAQK). Over residues 57–70 (HSSGSSNTSTANRS) the composition is skewed to polar residues. The bHLH domain occupies 67-119 (ANRSTHNELEKNRRAHLRLCLERLKVLIPLGPDCTRHTTLGLLNKAKAHIKKL). Positions 173–183 (EREEIEVDVES) are enriched in acidic residues. The span at 216–228 (GYSSASVKLSFTS) shows a compositional bias: polar residues.

As to quaternary structure, interacts with SMC3. Efficient DNA binding requires dimerization with another bHLH protein. Binds DNA as a heterodimer with MAX. Interacts with RNF17. As to expression, high levels found in the brain, heart and lung while lower levels are seen in the liver, kidney and skeletal muscle.

The protein localises to the nucleus. In terms of biological role, transcriptional repressor. MXI1 binds with MAX to form a sequence-specific DNA-binding protein complex which recognizes the core sequence 5'-CAC[GA]TG-3'. MXI1 thus antagonizes MYC transcriptional activity by competing for MAX. The sequence is that of Max-interacting protein 1 (MXI1) from Homo sapiens (Human).